The primary structure comprises 276 residues: NH(3)-dependent NAD(+) synthetase (276 aa).

ATP is bound at residue 43 to 50 (GISGGVDS). Aspartate 49 contributes to the Mg(2+) binding site. Arginine 146 is a deamido-NAD(+) binding site. Threonine 166 provides a ligand contact to ATP. Glutamate 171 is a Mg(2+) binding site. 2 residues coordinate deamido-NAD(+): lysine 179 and aspartate 186. 2 residues coordinate ATP: lysine 195 and threonine 217. 266–267 (HK) lines the deamido-NAD(+) pocket.

Belongs to the NAD synthetase family. In terms of assembly, homodimer.

The catalysed reaction is deamido-NAD(+) + NH4(+) + ATP = AMP + diphosphate + NAD(+) + H(+). It participates in cofactor biosynthesis; NAD(+) biosynthesis; NAD(+) from deamido-NAD(+) (ammonia route): step 1/1. Functionally, catalyzes the ATP-dependent amidation of deamido-NAD to form NAD. Uses ammonia as a nitrogen source. The protein is NH(3)-dependent NAD(+) synthetase of Aliivibrio fischeri (strain ATCC 700601 / ES114) (Vibrio fischeri).